Reading from the N-terminus, the 241-residue chain is MTIKDSIYASEQQVKDFSFDQNVVEVFPDMIQRSVPGYATIVSTMGKLAGEYAQSNSNLYDLGCSLGAVTLSMRRNIRTDNCHIIAVDNSQAMVERCKVHLQGFKSEVPVTVTLGDINELEIQNASVVAMNFTLQFIPHAQRQAVLEKIYANLKPGGVLLLSEKIKAENELCDNLLIDLHHDFKRHNGYSELEISQKRTAIENVMRPDTLSTHFTRLKDIGFSQTQAWYQCFNFCSMIAIK.

S-adenosyl-L-methionine is bound by residues Tyr-38, 63–65 (GCS), 88–89 (DN), 116–117 (DI), Asn-131, and Arg-198.

Belongs to the class I-like SAM-binding methyltransferase superfamily. Cx-SAM synthase family. As to quaternary structure, homodimer.

The enzyme catalyses prephenate + S-adenosyl-L-methionine = carboxy-S-adenosyl-L-methionine + 3-phenylpyruvate + H2O. Functionally, catalyzes the conversion of S-adenosyl-L-methionine (SAM) to carboxy-S-adenosyl-L-methionine (Cx-SAM). In Pseudoalteromonas translucida (strain TAC 125), this protein is Carboxy-S-adenosyl-L-methionine synthase.